Consider the following 86-residue polypeptide: MKTLLLSLVVVTIVCLDLGYTRLCLSDYSIFSETIEICPDGHNFCFKKFPKGITRLPWVIRGCAATCPKAEARVYVDCCARDKCNR.

The N-terminal stretch at 1–21 is a signal peptide; that stretch reads MKTLLLSLVVVTIVCLDLGYT. Disulfide bonds link cysteine 24/cysteine 45, cysteine 38/cysteine 63, cysteine 67/cysteine 78, and cysteine 79/cysteine 84.

It belongs to the three-finger toxin family. Short-chain subfamily. Orphan group I sub-subfamily. Expressed by the venom gland.

Its subcellular location is the secreted. The protein is Neurotoxin-like protein NTL2 of Naja atra (Chinese cobra).